The following is a 351-amino-acid chain: Holliday junction branch migration complex subunit RuvB (351 aa).

The disordered stretch occupies residues 1–22 (MSDPKANRMVSPERRSDDVGDT). Residues 2-185 (SDPKANRMVS…FGIPVRLNFY (184 aa)) form a large ATPase domain (RuvB-L) region. ATP is bound by residues Leu24, Arg25, Gly66, Lys69, Thr70, Thr71, 132-134 (EDF), Arg175, Tyr185, and Arg222. Thr70 lines the Mg(2+) pocket. The segment at 186–256 (TIEELESIVS…IADHALSALE (71 aa)) is small ATPAse domain (RuvB-S). A head domain (RuvB-H) region spans residues 259 to 351 (AAGLDAMDRR…GLFGTDESDD (93 aa)). The DNA site is built by Arg295, Arg314, and Arg319.

It belongs to the RuvB family. As to quaternary structure, homohexamer. Forms an RuvA(8)-RuvB(12)-Holliday junction (HJ) complex. HJ DNA is sandwiched between 2 RuvA tetramers; dsDNA enters through RuvA and exits via RuvB. An RuvB hexamer assembles on each DNA strand where it exits the tetramer. Each RuvB hexamer is contacted by two RuvA subunits (via domain III) on 2 adjacent RuvB subunits; this complex drives branch migration. In the full resolvosome a probable DNA-RuvA(4)-RuvB(12)-RuvC(2) complex forms which resolves the HJ.

The protein localises to the cytoplasm. It catalyses the reaction ATP + H2O = ADP + phosphate + H(+). In terms of biological role, the RuvA-RuvB-RuvC complex processes Holliday junction (HJ) DNA during genetic recombination and DNA repair, while the RuvA-RuvB complex plays an important role in the rescue of blocked DNA replication forks via replication fork reversal (RFR). RuvA specifically binds to HJ cruciform DNA, conferring on it an open structure. The RuvB hexamer acts as an ATP-dependent pump, pulling dsDNA into and through the RuvAB complex. RuvB forms 2 homohexamers on either side of HJ DNA bound by 1 or 2 RuvA tetramers; 4 subunits per hexamer contact DNA at a time. Coordinated motions by a converter formed by DNA-disengaged RuvB subunits stimulates ATP hydrolysis and nucleotide exchange. Immobilization of the converter enables RuvB to convert the ATP-contained energy into a lever motion, pulling 2 nucleotides of DNA out of the RuvA tetramer per ATP hydrolyzed, thus driving DNA branch migration. The RuvB motors rotate together with the DNA substrate, which together with the progressing nucleotide cycle form the mechanistic basis for DNA recombination by continuous HJ branch migration. Branch migration allows RuvC to scan DNA until it finds its consensus sequence, where it cleaves and resolves cruciform DNA. This is Holliday junction branch migration complex subunit RuvB from Bradyrhizobium diazoefficiens (strain JCM 10833 / BCRC 13528 / IAM 13628 / NBRC 14792 / USDA 110).